Reading from the N-terminus, the 774-residue chain is FT-interacting protein 7 (774 aa).

Residues 1–17 (MMQRPFRPEEYSLKETS) are compositionally biased toward basic and acidic residues. The interval 1–25 (MMQRPFRPEEYSLKETSPHLGGGAA) is disordered. 3 consecutive C2 domains span residues 23–143 (GAAG…PQWY), 182–305 (IPGD…SQWY), and 346–472 (YSSD…THAY). D56, D62, D109, D111, and D116 together coordinate Ca(2+). The next 3 membrane-spanning stretches (helical) occupy residues 575–595 (IMGVLSPLIAVAKWFDQICHW), 606–626 (ILFVILVLYPELILPTIFLYL), and 714–734 (ATALFVTFCFVAAIVLYVTPF).

Belongs to the MCTP family. Interacts with OSH1. It depends on Ca(2+) as a cofactor. In terms of tissue distribution, expressed in roots, stems, lemma, palea, pistils and ovules. Expressed at low levels in leaves.

It is found in the cell membrane. In terms of biological role, promotes nuclear translocation of the transcription factor OSH1, which directly suppresses the auxin biosynthetic gene YUCCA4 during the late development of anthers. Reduction of auxin levels at late stage of anther development, after meiosis of microspore mother cells, is necessary for normal anther dehiscence and seed setting. Required for jasmonate (JA) biosynthetic genes expression and JA production in anthers. This is FT-interacting protein 7 from Oryza sativa subsp. japonica (Rice).